A 252-amino-acid polypeptide reads, in one-letter code: uncharacterized protein (252 aa).

The signal sequence occupies residues 1-22; it reads MIHSKRLRLWLYLVLLAVFISA. Cys-23 carries the N-palmitoyl cysteine lipid modification. A lipid anchor (S-diacylglycerol cysteine) is attached at Cys-23.

It belongs to the staphylococcal tandem lipoprotein family.

It localises to the cell membrane. This is an uncharacterized protein from Staphylococcus aureus (strain MW2).